A 285-amino-acid polypeptide reads, in one-letter code: NAD kinase (285 aa).

Residue aspartate 76 is the Proton acceptor of the active site. NAD(+) is bound by residues 76 to 77, 151 to 152, histidine 162, arginine 179, aspartate 181, 192 to 197, and glutamine 252; these read DG, NE, and TAYSLS.

It belongs to the NAD kinase family. The cofactor is a divalent metal cation.

The protein resides in the cytoplasm. It carries out the reaction NAD(+) + ATP = ADP + NADP(+) + H(+). Involved in the regulation of the intracellular balance of NAD and NADP, and is a key enzyme in the biosynthesis of NADP. Catalyzes specifically the phosphorylation on 2'-hydroxyl of the adenosine moiety of NAD to yield NADP. This Haemophilus influenzae (strain ATCC 51907 / DSM 11121 / KW20 / Rd) protein is NAD kinase.